The sequence spans 102 residues: Small ribosomal subunit protein uS10 (102 aa).

It belongs to the universal ribosomal protein uS10 family. In terms of assembly, part of the 30S ribosomal subunit.

In terms of biological role, involved in the binding of tRNA to the ribosomes. The protein is Small ribosomal subunit protein uS10 of Clostridium botulinum (strain ATCC 19397 / Type A).